Reading from the N-terminus, the 366-residue chain is tRNA/tmRNA (uracil-C(5))-methyltransferase (366 aa).

S-adenosyl-L-methionine is bound by residues glutamine 189, tyrosine 217, asparagine 222, glutamate 238, and aspartate 298. Cysteine 323 (nucleophile) is an active-site residue. The active-site Proton acceptor is glutamate 357.

It belongs to the class I-like SAM-binding methyltransferase superfamily. RNA M5U methyltransferase family. TrmA subfamily.

The enzyme catalyses uridine(54) in tRNA + S-adenosyl-L-methionine = 5-methyluridine(54) in tRNA + S-adenosyl-L-homocysteine + H(+). It catalyses the reaction uridine(341) in tmRNA + S-adenosyl-L-methionine = 5-methyluridine(341) in tmRNA + S-adenosyl-L-homocysteine + H(+). Functionally, dual-specificity methyltransferase that catalyzes the formation of 5-methyluridine at position 54 (m5U54) in all tRNAs, and that of position 341 (m5U341) in tmRNA (transfer-mRNA). This Shewanella oneidensis (strain ATCC 700550 / JCM 31522 / CIP 106686 / LMG 19005 / NCIMB 14063 / MR-1) protein is tRNA/tmRNA (uracil-C(5))-methyltransferase.